Consider the following 31-residue polypeptide: Relaxin B chain (31 aa).

Gln-1 carries the pyrrolidone carboxylic acid modification.

Belongs to the insulin family. Heterodimer of a B chain and an A chain linked by two disulfide bonds.

Its subcellular location is the secreted. Relaxin is an ovarian hormone that acts with estrogen to produce dilatation of the birth canal in many mammals. This is Relaxin B chain from Phocoenoides dalli dalli (Dall's porpoise).